The following is a 773-amino-acid chain: Preaspterpenacid I synthase sttA (773 aa).

The sesterterpenoid synthase stretch occupies residues 4–359; it reads ISDVMKHCVP…RYHRTDLATT (356 aa). Asp-105 lines the Mg(2+) pocket. Asp-105 contacts substrate. Positions 211–214 are substrate; sequence RVNE. Position 255 (Asn-255) interacts with substrate. Substrate stretches follow at residues 259–263 and 350–351; these read SFPKE and RY. The segment at 360–769 is geranylfarnesyl diphosphate synthase; that stretch reads AEDRATLIGK…RMMLLGMGPK (410 aa). Positions 423-447 are disordered; the sequence is AFKKRNSRNGKQNGTEGSKSTFTNG. The span at 431-447 shows a compositional bias: polar residues; that stretch reads NGKQNGTEGSKSTFTNG. Lys-493, Arg-496, and His-525 together coordinate isopentenyl diphosphate. Residues Asp-532 and Asp-536 each contribute to the Mg(2+) site. Residue Arg-541 participates in dimethylallyl diphosphate binding. Arg-542 serves as a coordination point for isopentenyl diphosphate. Residues Lys-614, Thr-615, Gln-652, Asn-659, and Lys-669 each coordinate dimethylallyl diphosphate.

It in the N-terminal section; belongs to the terpene synthase family. In the C-terminal section; belongs to the FPP/GGPP synthase family.

The catalysed reaction is 4 isopentenyl diphosphate + dimethylallyl diphosphate = (2E,6E,10E,14E)-geranylfarnesyl diphosphate + 4 diphosphate. It catalyses the reaction (2E,6E,10E,14E)-geranylfarnesyl diphosphate + H2O = preaspterpenacid acid I + diphosphate. Its pathway is secondary metabolite biosynthesis; terpenoid biosynthesis. Its function is as follows. Sesterterpenoid synthase; part of the gene cluster that mediates the biosynthesis of aspterpenacids. Performs both prenyl transferase and terpene cyclase activity, converting isopentenyl diphosphate and dimethylallyl diphosphate into geranylfarnesyl diphosphate (GFPP) and then converting GFPP into preaspterpenacid I. C22-oxidative modification of preaspterpenacid I by the cytochrome P450 monooxygenase sttB then leads to preaspterpenacid II. It has still to be determined how preaspterpenacid II is further modified to produce aspterpenacids. In Aspergillus terreus (strain NIH 2624 / FGSC A1156), this protein is Preaspterpenacid I synthase sttA.